A 274-amino-acid polypeptide reads, in one-letter code: Tryptophan synthase alpha chain (274 aa).

Active-site proton acceptor residues include Glu49 and Asp60.

Belongs to the TrpA family. As to quaternary structure, tetramer of two alpha and two beta chains.

It carries out the reaction (1S,2R)-1-C-(indol-3-yl)glycerol 3-phosphate + L-serine = D-glyceraldehyde 3-phosphate + L-tryptophan + H2O. It functions in the pathway amino-acid biosynthesis; L-tryptophan biosynthesis; L-tryptophan from chorismate: step 5/5. In terms of biological role, the alpha subunit is responsible for the aldol cleavage of indoleglycerol phosphate to indole and glyceraldehyde 3-phosphate. The protein is Tryptophan synthase alpha chain of Alkalilimnicola ehrlichii (strain ATCC BAA-1101 / DSM 17681 / MLHE-1).